A 206-amino-acid polypeptide reads, in one-letter code: Large ribosomal subunit protein bL25 (206 aa).

Belongs to the bacterial ribosomal protein bL25 family. CTC subfamily. As to quaternary structure, part of the 50S ribosomal subunit; part of the 5S rRNA/L5/L18/L25 subcomplex. Contacts the 5S rRNA. Binds to the 5S rRNA independently of L5 and L18.

Functionally, this is one of the proteins that binds to the 5S RNA in the ribosome where it forms part of the central protuberance. The chain is Large ribosomal subunit protein bL25 from Bartonella henselae (strain ATCC 49882 / DSM 28221 / CCUG 30454 / Houston 1) (Rochalimaea henselae).